A 235-amino-acid polypeptide reads, in one-letter code: Exosome complex component Rrp4 (235 aa).

The region spanning 67–139 (GDVVIGLIQS…KTRSPLLTVQ (73 aa)) is the S1 motif domain. The KH domain occupies 149–205 (GKIVEISPAKVPRVIGRKMSMLKTLEEKTECKIFVARNGRIHLECPNEDLEAIAVMA).

The protein belongs to the RRP4 family. Component of the archaeal exosome complex. Forms a trimer of Rrp4 and/or Csl4 subunits. The trimer associates with a hexameric ring-like arrangement composed of 3 Rrp41-Rrp42 heterodimers.

It localises to the cytoplasm. In terms of biological role, non-catalytic component of the exosome, which is a complex involved in RNA degradation. Increases the RNA binding and the efficiency of RNA degradation. Confers strong poly(A) specificity to the exosome. The polypeptide is Exosome complex component Rrp4 (Aeropyrum pernix (strain ATCC 700893 / DSM 11879 / JCM 9820 / NBRC 100138 / K1)).